A 252-amino-acid chain; its full sequence is ATP synthase subunit a (252 aa).

6 helical membrane passes run 29-49 (FTNV…FLFI), 87-107 (FFPL…IGLF), 117-137 (IMIT…YGFY), 146-166 (LFVP…IEVI), 196-216 (FIVS…LPLI), and 219-239 (VAIT…FTVL).

This sequence belongs to the ATPase A chain family. In terms of assembly, F-type ATPases have 2 components, CF(1) - the catalytic core - and CF(0) - the membrane proton channel. CF(1) has five subunits: alpha(3), beta(3), gamma(1), delta(1), epsilon(1). CF(0) has three main subunits: a(1), b(2) and c(9-12). The alpha and beta chains form an alternating ring which encloses part of the gamma chain. CF(1) is attached to CF(0) by a central stalk formed by the gamma and epsilon chains, while a peripheral stalk is formed by the delta and b chains.

It localises to the cell inner membrane. Key component of the proton channel; it plays a direct role in the translocation of protons across the membrane. The sequence is that of ATP synthase subunit a from Bartonella henselae (strain ATCC 49882 / DSM 28221 / CCUG 30454 / Houston 1) (Rochalimaea henselae).